The sequence spans 102 residues: Small ribosomal subunit protein uS10 (102 aa).

This sequence belongs to the universal ribosomal protein uS10 family. Part of the 30S ribosomal subunit.

Involved in the binding of tRNA to the ribosomes. This is Small ribosomal subunit protein uS10 from Rhodospirillum centenum (strain ATCC 51521 / SW).